We begin with the raw amino-acid sequence, 308 residues long: Methionyl-tRNA formyltransferase (308 aa).

Position 110-113 (110-113 (SLLP)) interacts with (6S)-5,6,7,8-tetrahydrofolate.

This sequence belongs to the Fmt family.

The enzyme catalyses L-methionyl-tRNA(fMet) + (6R)-10-formyltetrahydrofolate = N-formyl-L-methionyl-tRNA(fMet) + (6S)-5,6,7,8-tetrahydrofolate + H(+). In terms of biological role, attaches a formyl group to the free amino group of methionyl-tRNA(fMet). The formyl group appears to play a dual role in the initiator identity of N-formylmethionyl-tRNA by promoting its recognition by IF2 and preventing the misappropriation of this tRNA by the elongation apparatus. The protein is Methionyl-tRNA formyltransferase of Neisseria gonorrhoeae (strain ATCC 700825 / FA 1090).